Reading from the N-terminus, the 39-residue chain is Photosystem II reaction center protein J (39 aa).

Residues 7-27 form a helical membrane-spanning segment; that stretch reads IPLWVVAVIAGLGVIAVVGLF.

It belongs to the PsbJ family. In terms of assembly, PSII is composed of 1 copy each of membrane proteins PsbA, PsbB, PsbC, PsbD, PsbE, PsbF, PsbH, PsbI, PsbJ, PsbK, PsbL, PsbM, PsbT, PsbX, PsbY, PsbZ, Psb30/Ycf12, peripheral proteins PsbO, CyanoQ (PsbQ), PsbU, PsbV and a large number of cofactors. It forms dimeric complexes.

The protein localises to the cellular thylakoid membrane. In terms of biological role, one of the components of the core complex of photosystem II (PSII). PSII is a light-driven water:plastoquinone oxidoreductase that uses light energy to abstract electrons from H(2)O, generating O(2) and a proton gradient subsequently used for ATP formation. It consists of a core antenna complex that captures photons, and an electron transfer chain that converts photonic excitation into a charge separation. In Gloeothece citriformis (strain PCC 7424) (Cyanothece sp. (strain PCC 7424)), this protein is Photosystem II reaction center protein J.